The following is a 150-amino-acid chain: Globin-5 (150 aa).

The Globin domain maps to 11–150 (PLSAAEKTKI…MICILLRSAY (140 aa)). Heme b contacts are provided by His-74 and His-106.

This sequence belongs to the globin family. Monomer at high oxygen tension and high pH and dimeric at low oxygen tension and lower pH.

The chain is Globin-5 from Petromyzon marinus (Sea lamprey).